Consider the following 254-residue polypeptide: Protein odd-skipped-related 2 (254 aa).

C2H2-type zinc fingers lie at residues 124–146, 152–174, and 180–202; these read FICK…ERTH, YSCD…KYIH, and FKCE…RATH.

The protein belongs to the Odd C2H2-type zinc-finger protein family.

Its subcellular location is the nucleus. Its function is as follows. May function as transcription regulator. Required for morphogenesis and function of the digestive tract. In Caenorhabditis elegans, this protein is Protein odd-skipped-related 2.